Consider the following 199-residue polypeptide: dTTP/UTP pyrophosphatase (199 aa).

The active-site Proton acceptor is Asp73.

It belongs to the Maf family. YhdE subfamily. A divalent metal cation serves as cofactor.

The protein localises to the cytoplasm. The enzyme catalyses dTTP + H2O = dTMP + diphosphate + H(+). It carries out the reaction UTP + H2O = UMP + diphosphate + H(+). Functionally, nucleoside triphosphate pyrophosphatase that hydrolyzes dTTP and UTP. May have a dual role in cell division arrest and in preventing the incorporation of modified nucleotides into cellular nucleic acids. The protein is dTTP/UTP pyrophosphatase of Caldicellulosiruptor bescii (strain ATCC BAA-1888 / DSM 6725 / KCTC 15123 / Z-1320) (Anaerocellum thermophilum).